The sequence spans 419 residues: MNREEQRLAQQTMAFVLAGGRGSRLYELTDRRAKPAMYFGGKSRIIDFPLSNAVNSGIRRIGVATQYKAHSLIRHLQRGWSFFRAERNESLDILPASQQMNDENWYKGTADAVAQNKDIIEGYGPKYIIILAGDHIYKQDYAEMIRHHVESGADVTVGCIEVPRMEASGFGVMKVDTEDRILDFIEKPGDPPAMPGHPDQALASMGIYVFETEYLFKIMEECAAVPGYSHDFGGDIIPTIVRGGKAVAHPFSRSCVRTVNEEAPYWRDVGTVDAFWQANLDLTDFKPALDLYDTEWPIWTYSELTAPAKFIHNEEGRRGSAVSSMVSGGCIISGSSLERCLLFTGVRTHSFSQLNGVVSMPYAIINRNARLTNVVVDRGVVIPQGLVVGEDPALDAQRFRRTDSGVCLITQPMIDKLDM.

Alpha-D-glucose 1-phosphate contacts are provided by residues Tyr106, Gly171, 186 to 187 (EK), and Ser204.

Belongs to the bacterial/plant glucose-1-phosphate adenylyltransferase family. Homotetramer.

It catalyses the reaction alpha-D-glucose 1-phosphate + ATP + H(+) = ADP-alpha-D-glucose + diphosphate. It functions in the pathway glycan biosynthesis; glycogen biosynthesis. Functionally, involved in the biosynthesis of ADP-glucose, a building block required for the elongation reactions to produce glycogen. Catalyzes the reaction between ATP and alpha-D-glucose 1-phosphate (G1P) to produce pyrophosphate and ADP-Glc. This is Glucose-1-phosphate adenylyltransferase from Roseobacter denitrificans (strain ATCC 33942 / OCh 114) (Erythrobacter sp. (strain OCh 114)).